The chain runs to 268 residues: 4-hydroxy-tetrahydrodipicolinate reductase (268 aa).

An NAD(+)-binding site is contributed by 8 to 13; it reads GAAGRM. Residue arginine 36 participates in NADP(+) binding. NAD(+) is bound by residues 99-101 and 123-126; these read GTT and AANF. Histidine 156 serves as the catalytic Proton donor/acceptor. Residue histidine 157 coordinates (S)-2,3,4,5-tetrahydrodipicolinate. Lysine 160 acts as the Proton donor in catalysis. 166–167 contacts (S)-2,3,4,5-tetrahydrodipicolinate; that stretch reads GT.

The protein belongs to the DapB family.

It localises to the cytoplasm. The catalysed reaction is (S)-2,3,4,5-tetrahydrodipicolinate + NAD(+) + H2O = (2S,4S)-4-hydroxy-2,3,4,5-tetrahydrodipicolinate + NADH + H(+). The enzyme catalyses (S)-2,3,4,5-tetrahydrodipicolinate + NADP(+) + H2O = (2S,4S)-4-hydroxy-2,3,4,5-tetrahydrodipicolinate + NADPH + H(+). It participates in amino-acid biosynthesis; L-lysine biosynthesis via DAP pathway; (S)-tetrahydrodipicolinate from L-aspartate: step 4/4. Catalyzes the conversion of 4-hydroxy-tetrahydrodipicolinate (HTPA) to tetrahydrodipicolinate. This is 4-hydroxy-tetrahydrodipicolinate reductase from Pseudomonas fluorescens (strain SBW25).